The sequence spans 506 residues: Protein CYCLOPS (506 aa).

2 disordered regions span residues 193-223 (TVNSAPMSNTPSQTPTFVSPSSSSTSPLDNP) and 385-434 (KENL…RSST). The segment covering 202 to 219 (TPSQTPTFVSPSSSSTSP) has biased composition (low complexity). The span at 385–394 (KENLKDDRKK) shows a compositional bias: basic and acidic residues. Residues 415-418 (KKRR) carry the Nuclear localization signal motif. The segment covering 422–432 (SRKMAEAKERS) has biased composition (basic and acidic residues). A coiled-coil region spans residues 441 to 506 (IQVVLKRCET…IERIVSDTNT (66 aa)).

The protein belongs to the CYCLOPS family. Highly epressed in roots. Expressed at very low levels in leaves, stems and panicles.

The protein localises to the nucleus. Its function is as follows. Involved in arbuscular mycorrhizal (AM) symbiosis. Required for fungal infection in roots and arbuscule development during AM symbiosis. The chain is Protein CYCLOPS from Oryza sativa subsp. japonica (Rice).